The primary structure comprises 235 residues: Ribosomal RNA small subunit methyltransferase G (235 aa).

S-adenosyl-L-methionine is bound by residues glycine 98, methionine 103, 149 to 150, and arginine 164; that span reads VE.

This sequence belongs to the methyltransferase superfamily. RNA methyltransferase RsmG family.

It localises to the cytoplasm. The catalysed reaction is guanosine(527) in 16S rRNA + S-adenosyl-L-methionine = N(7)-methylguanosine(527) in 16S rRNA + S-adenosyl-L-homocysteine. Its function is as follows. Specifically methylates the N7 position of guanine in position 527 of 16S rRNA. The sequence is that of Ribosomal RNA small subunit methyltransferase G from Cupriavidus metallidurans (strain ATCC 43123 / DSM 2839 / NBRC 102507 / CH34) (Ralstonia metallidurans).